We begin with the raw amino-acid sequence, 166 residues long: Ubiquitin-conjugating enzyme E2-18 kDa (166 aa).

In terms of domain architecture, UBC core spans 5 to 165 (MALRRLMKEY…VRRLARKTLG (161 aa)). C90 acts as the Glycyl thioester intermediate in catalysis. Residue C90 forms a Glycyl cysteine thioester (Cys-Gly) (interchain with G-Cter in ubiquitin) linkage.

Belongs to the ubiquitin-conjugating enzyme family. Post-translationally, autoubiquitinated at Cys-90; undergoes 'Lys-48'-linked polyubiquitination, which leads to proteasome-dependent protein degradation.

It carries out the reaction S-ubiquitinyl-[E1 ubiquitin-activating enzyme]-L-cysteine + [E2 ubiquitin-conjugating enzyme]-L-cysteine = [E1 ubiquitin-activating enzyme]-L-cysteine + S-ubiquitinyl-[E2 ubiquitin-conjugating enzyme]-L-cysteine.. The protein operates within protein modification; protein ubiquitination. Catalyzes the covalent attachment of ubiquitin to other proteins. Functions in degradation of misfolded or regulated proteins localized in the endoplasmic reticulum (ER) lumen or membrane via the ubiquitin-proteasome system. Cognate E2 conjugating enzyme for the doa10 ubiquitin ligase complex, which is part of the ERAD-C pathway responsible for the rapid degradation of membrane proteins with misfolded cytoplasmic domains, and of the hrd1 ubiquitin ligase complex, which is part of the ERAD-L and ERAD-M pathways responsible for the rapid degradation of soluble lumenal and membrane proteins with misfolded lumenal domains (ERAD-L), or ER-membrane proteins with misfolded transmembrane domains (ERAD-M). Together with hrd1, required for the degradation of the transcription factor sre1 precursor in the absence of its binding partner scp1. Has a role in the formation of chromatin structures that influence the localization of transcriptional silencing factors. In Schizosaccharomyces pombe (strain 972 / ATCC 24843) (Fission yeast), this protein is Ubiquitin-conjugating enzyme E2-18 kDa (ubc7).